A 715-amino-acid polypeptide reads, in one-letter code: Fatty acid oxidation complex subunit alpha (715 aa).

The enoyl-CoA hydratase/isomerase stretch occupies residues 1 to 190 (MIYEGKAITV…KVGAVDAVVA (190 aa)). A substrate-binding site is contributed by D297. The tract at residues 312–715 (HDVKQAAVLG…MAKNGQRFFN (404 aa)) is 3-hydroxyacyl-CoA dehydrogenase. Residues M325, D344, 401 to 403 (VVE), K408, and S430 contribute to the NAD(+) site. H451 serves as the catalytic For 3-hydroxyacyl-CoA dehydrogenase activity. N454 serves as a coordination point for NAD(+). N501 and Y660 together coordinate substrate.

This sequence in the N-terminal section; belongs to the enoyl-CoA hydratase/isomerase family. In the C-terminal section; belongs to the 3-hydroxyacyl-CoA dehydrogenase family. In terms of assembly, heterotetramer of two alpha chains (FadB) and two beta chains (FadA).

The enzyme catalyses a (3S)-3-hydroxyacyl-CoA + NAD(+) = a 3-oxoacyl-CoA + NADH + H(+). The catalysed reaction is a (3S)-3-hydroxyacyl-CoA = a (2E)-enoyl-CoA + H2O. It carries out the reaction a 4-saturated-(3S)-3-hydroxyacyl-CoA = a (3E)-enoyl-CoA + H2O. It catalyses the reaction (3S)-3-hydroxybutanoyl-CoA = (3R)-3-hydroxybutanoyl-CoA. The enzyme catalyses a (3Z)-enoyl-CoA = a 4-saturated (2E)-enoyl-CoA. The catalysed reaction is a (3E)-enoyl-CoA = a 4-saturated (2E)-enoyl-CoA. It participates in lipid metabolism; fatty acid beta-oxidation. Involved in the aerobic and anaerobic degradation of long-chain fatty acids via beta-oxidation cycle. Catalyzes the formation of 3-oxoacyl-CoA from enoyl-CoA via L-3-hydroxyacyl-CoA. It can also use D-3-hydroxyacyl-CoA and cis-3-enoyl-CoA as substrate. This chain is Fatty acid oxidation complex subunit alpha, found in Pseudomonas putida (Arthrobacter siderocapsulatus).